The chain runs to 399 residues: L-2-hydroxyglutarate dehydrogenase (399 aa).

This sequence belongs to the L2HGDH family. FAD is required as a cofactor.

The catalysed reaction is (S)-2-hydroxyglutarate + A = 2-oxoglutarate + AH2. Catalyzes the dehydrogenation of L-2-hydroxyglutarate (L2HG or(S)-2-hydroxyglutarate) to 2-oxoglutarate (alpha-ketoglutarate). Active in vitro with the artificial electron acceptor 2,6-dichlorophenolindophenol (DCPIP). Also displays a very low oxidase activity in vitro on L-2-hydroxyglutarate with O2 as the electron acceptor, but this activity is most likely not physiological. This Indibacter alkaliphilus (strain CCUG 57479 / KCTC 22604 / LW1) protein is L-2-hydroxyglutarate dehydrogenase.